The following is a 2547-amino-acid chain: Piezo-type mechanosensitive ion channel component 1 (2547 aa).

The Cytoplasmic portion of the chain corresponds to methionine 1–tryptophan 12. Residues leucine 13–leucine 25 form a helical membrane-spanning segment. Topologically, residues arginine 26–asparagine 28 are extracellular. The helical transmembrane segment at alanine 29–leucine 44 threads the bilayer. At proline 45–arginine 58 the chain is on the cytoplasmic side. Residues leucine 59–leucine 81 form a helical membrane-spanning segment. Over histidine 82–leucine 121 the chain is Extracellular. N-linked (GlcNAc...) asparagine glycosylation is present at asparagine 94. The chain crosses the membrane as a helical span at residues valine 122–leucine 138. Residues cysteine 139–tryptophan 201 lie on the Cytoplasmic side of the membrane. The chain crosses the membrane as a helical span at residues leucine 202 to alanine 221. Residues histidine 222 to proline 223 lie on the Extracellular side of the membrane. Residues serine 224–cysteine 243 form a helical membrane-spanning segment. Over histidine 244–threonine 254 the chain is Cytoplasmic. Residues leucine 255–threonine 275 form a helical membrane-spanning segment. The Extracellular portion of the chain corresponds to proline 276–alanine 316. A helical transmembrane segment spans residues tryptophan 317–leucine 337. Topologically, residues lysine 338–histidine 424 are cytoplasmic. Residues leucine 347 to leucine 387 form a disordered region. Residues glutamate 361–alanine 371 are compositionally biased toward basic and acidic residues. The chain crosses the membrane as a helical span at residues leucine 425–tyrosine 445. The Extracellular segment spans residues histidine 446–serine 447. The chain crosses the membrane as a helical span at residues tryptophan 448 to valine 463. The Cytoplasmic portion of the chain corresponds to arginine 464 to glutamine 468. A helical transmembrane segment spans residues leucine 469–tryptophan 491. Residues alanine 492–proline 518 lie on the Extracellular side of the membrane. A helical transmembrane segment spans residues cysteine 519–leucine 536. The Cytoplasmic portion of the chain corresponds to arginine 537–glycine 580. The helical transmembrane segment at isoleucine 581–glycine 601 threads the bilayer. Residue arginine 602 is a topological domain, extracellular. Residues leucine 603–valine 623 form a helical membrane-spanning segment. The Cytoplasmic portion of the chain corresponds to tyrosine 624–arginine 633. A helical transmembrane segment spans residues valine 634 to phenylalanine 655. Residues glutamine 656–glutamate 685 lie on the Extracellular side of the membrane. Residues leucine 686–leucine 702 form a helical membrane-spanning segment. Residues glutamine 703–lysine 811 are Cytoplasmic-facing. The residue at position 758 (serine 758) is a Phosphoserine. The chain crosses the membrane as a helical span at residues leucine 812–lysine 823. Residues glutamate 824–serine 826 are Extracellular-facing. A helical transmembrane segment spans residues valine 827–leucine 840. Topologically, residues proline 841–threonine 854 are cytoplasmic. Residues valine 855–leucine 869 traverse the membrane as a helical segment. At lysine 870 to leucine 921 the chain is on the extracellular side. Residues glycine 922–arginine 949 traverse the membrane as a helical segment. The Cytoplasmic portion of the chain corresponds to glutamine 950 to phenylalanine 989. A helical transmembrane segment spans residues glycine 990 to arginine 1005. Residues methionine 1006–asparagine 1007 lie on the Extracellular side of the membrane. A helical transmembrane segment spans residues phenylalanine 1008–arginine 1023. The Cytoplasmic portion of the chain corresponds to arginine 1024–tyrosine 1036. The chain crosses the membrane as a helical span at residues cysteine 1037–leucine 1052. At glycine 1053–serine 1091 the chain is on the extracellular side. The chain crosses the membrane as a helical span at residues threonine 1092–alanine 1113. Residues glutamate 1114–serine 1148 lie on the Cytoplasmic side of the membrane. The chain crosses the membrane as a helical span at residues tyrosine 1149–threonine 1175. Residues arginine 1176 to phenylalanine 1180 lie on the Extracellular side of the membrane. Residues glycine 1181–leucine 1199 form a helical membrane-spanning segment. Topologically, residues glutamine 1200–cysteine 1212 are cytoplasmic. The chain crosses the membrane as a helical span at residues leucine 1213 to serine 1231. The Extracellular portion of the chain corresponds to cysteine 1232–isoleucine 1280. Residues isoleucine 1281–phenylalanine 1297 traverse the membrane as a helical segment. Residues leucine 1298–isoleucine 1656 lie on the Cytoplasmic side of the membrane. A coiled-coil region spans residues histidine 1334–serine 1365. Disordered stretches follow at residues alanine 1354–tryptophan 1396, arginine 1456–proline 1480, and threonine 1567–serine 1610. Over residues glutamine 1361 to lysine 1372 the composition is skewed to polar residues. Residues aspartate 1376 to proline 1392 are compositionally biased toward low complexity. Residues serine 1385 and serine 1390 each carry the phosphoserine modification. Polar residues predominate over residues serine 1592–serine 1610. Phosphoserine occurs at positions 1627, 1631, and 1646. Residues proline 1657–methionine 1700 form a helical membrane-spanning segment. At valine 1701–serine 1704 the chain is on the extracellular side. Residues alanine 1705 to leucine 1720 form a helical membrane-spanning segment. Over threonine 1721–arginine 1728 the chain is Cytoplasmic. A helical transmembrane segment spans residues phenylalanine 1729–phenylalanine 1747. The Extracellular segment spans residues glutamine 1748–threonine 1779. The helical transmembrane segment at aspartate 1780–leucine 1801 threads the bilayer. Topologically, residues cysteine 1802–valine 1976 are cytoplasmic. Basic and acidic residues-rich tracts occupy residues aspartate 1816–serine 1837 and proline 1855–proline 1880. Residues aspartate 1816–lysine 1931 form a disordered region. Over residues arginine 1881–lysine 1894 the composition is skewed to basic residues. Basic and acidic residues predominate over residues glycine 1912–lysine 1931. Residues tyrosine 1977–tryptophan 1996 form a helical membrane-spanning segment. Residues alanine 1997–valine 2016 lie on the Extracellular side of the membrane. Residues proline 2017 to isoleucine 2033 traverse the membrane as a helical segment. Residues aspartate 2034–leucine 2047 are Cytoplasmic-facing. A helical transmembrane segment spans residues alanine 2048–valine 2068. Topologically, residues threonine 2069 to asparagine 2076 are extracellular. The chain crosses the membrane as a helical span at residues alanine 2077–leucine 2092. The Cytoplasmic segment spans residues serine 2093–glycine 2192. A helical membrane pass occupies residues glycine 2193–isoleucine 2213. The Extracellular segment spans residues arginine 2214 to serine 2457. A disulfide bridge connects residues cysteine 2437 and cysteine 2441. Residues leucine 2458–glycine 2478 form a helical membrane-spanning segment. The Cytoplasmic portion of the chain corresponds to lysine 2479–glutamate 2547.

This sequence belongs to the PIEZO (TC 1.A.75) family. As to quaternary structure, homotrimer; the homotrimer forms a propeller-shaped Piezo channel with a cation-ion conducting pore. Heterotrimeric interaction may occur between PIEZO1 and PIEZO2. Interacts with PKD2. Interacts with STOMl3. Interacts with TMC1, TMC2, PCDG15 and CIB2; the interaction may be part of the MET complex. Interacts with MDFIC (via C-terminus); the interaction prolongs Piezo channel inactivation. Interacts with MDFI (via C-terminus); the interaction prolongs Piezo channel inactivation. Expressed in bladder, colon, kidney and skin. Also expressed in bone marrow, liver, lung, spleen and erythrocytes (at protein level). Expressed in myoblasts (at protein level). Expressed in red blood cells. Expressed in cochlear inner and outer hair cells (IHCs and OHCs) and vestibular organ HCs.

It is found in the endoplasmic reticulum membrane. It localises to the endoplasmic reticulum-Golgi intermediate compartment membrane. Its subcellular location is the cell membrane. The protein localises to the cell projection. The protein resides in the lamellipodium membrane. It catalyses the reaction K(+)(in) = K(+)(out). The catalysed reaction is Na(+)(in) = Na(+)(out). It carries out the reaction Ca(2+)(in) = Ca(2+)(out). The enzyme catalyses Mg(2+)(in) = Mg(2+)(out). Regulated by auxillary subunits MDFIC and MDFI. Down-regulated by phosphatidylserines exposed on the cell surface. Divalent ions decrease the single-channel permeability of K(+). Its function is as follows. Pore-forming subunit of the mechanosensitive non-specific cation Piezo channel required for rapidly adapting mechanically activated (MA) currents and has a key role in sensing touch and tactile pain. Piezo channels are homotrimeric three-blade propeller-shaped structures that utilize a cap-motion and plug-and-latch mechanism to gate their ion-conducting pathways. Generates currents characterized by a linear current-voltage relationship that are sensitive to ruthenium red and gadolinium. Conductance to monovalent alkali ions is highest for K(+), intermediate for Na(+) and lowest for Li(+). Divalent ions except for Mn(2+) permeate the channel but more slowly than the monovalent ions and they also reduce K(+) currents. Plays a key role in epithelial cell adhesion by maintaining integrin activation through R-Ras recruitment to the ER, most probably in its activated state, and subsequent stimulation of calpain signaling. In inner ear hair cells, PIEZO1/2 subunits may constitute part of the mechanotransducer (MET) non-selective cation channel complex where they may act as pore-forming ion-conducting component in the complex. In the kidney, may contribute to the detection of intraluminal pressure changes and to urine flow sensing. Acts as a shear-stress sensor that promotes endothelial cell organization and alignment in the direction of blood flow through calpain activation. Plays a key role in blood vessel formation and vascular structure in both development and adult physiology. Acts as a sensor of phosphatidylserine (PS) flipping at the plasma membrane and governs morphogenesis of muscle cells. In myoblasts, flippase-mediated PS enrichment at the inner leaflet of plasma membrane triggers channel activation and Ca(2+) influx followed by Rho GTPases signal transduction, leading to assembly of cortical actomyosin fibers and myotube formation. In Mus musculus (Mouse), this protein is Piezo-type mechanosensitive ion channel component 1.